Here is a 446-residue protein sequence, read N- to C-terminus: Tubulin beta-6 chain (446 aa).

GTP contacts are provided by Gln-11, Glu-69, Ser-138, Gly-142, Thr-143, Gly-144, Asn-204, and Asn-226. Residue Glu-69 participates in Mg(2+) binding. The disordered stretch occupies residues 426-446; sequence QDATADEEEYEDEEEVQADDM. Residues 429 to 446 are compositionally biased toward acidic residues; it reads TADEEEYEDEEEVQADDM.

The protein belongs to the tubulin family. In terms of assembly, dimer of alpha and beta chains. A typical microtubule is a hollow water-filled tube with an outer diameter of 25 nm and an inner diameter of 15 nM. Alpha-beta heterodimers associate head-to-tail to form protofilaments running lengthwise along the microtubule wall with the beta-tubulin subunit facing the microtubule plus end conferring a structural polarity. Microtubules usually have 13 protofilaments but different protofilament numbers can be found in some organisms and specialized cells. The cofactor is Mg(2+).

The protein resides in the cytoplasm. It is found in the cytoskeleton. Functionally, tubulin is the major constituent of microtubules, a cylinder consisting of laterally associated linear protofilaments composed of alpha- and beta-tubulin heterodimers. Microtubules grow by the addition of GTP-tubulin dimers to the microtubule end, where a stabilizing cap forms. Below the cap, tubulin dimers are in GDP-bound state, owing to GTPase activity of alpha-tubulin. The sequence is that of Tubulin beta-6 chain (TUBB6) from Zea mays (Maize).